Here is a 197-residue protein sequence, read N- to C-terminus: Guanylate kinase (197 aa).

The tract at residues M1–K30 is disordered. The region spanning P17–V197 is the Guanylate kinase-like domain. ATP is bound at residue G24 to S31.

This sequence belongs to the guanylate kinase family.

The protein localises to the cytoplasm. It catalyses the reaction GMP + ATP = GDP + ADP. Functionally, essential for recycling GMP and indirectly, cGMP. This Streptomyces coelicolor (strain ATCC BAA-471 / A3(2) / M145) protein is Guanylate kinase (gmk).